We begin with the raw amino-acid sequence, 213 residues long: Kiwellin (213 aa).

An N-terminal signal peptide occupies residues 1–24; the sequence is MAQLALLLLSLFLTLISLAPPGAS. Cystine bridges form between C28–C60, C32–C44, and C38–C49. A 4-hydroxyproline mark is found at P65 and P67. 4 cysteine pairs are disulfide-bonded: C72–C90, C80–C172, C119–C144, and C166–C172. Residues 91–121 form a disordered region; that stretch reads SPPVTSSTPAKLTNNDFSEGGDDGGPSECDE. Residues 93 to 107 show a composition bias toward polar residues; the sequence is PVTSSTPAKLTNNDF.

The protein belongs to the kiwellin family. In terms of processing, undergoes proteolytic cleavage by actinidin to produce kissper and KiTH. Three forms of KiTH are produced by cleavage at different sites, the main form produced in vivo is KiTH-1.

The protein resides in the secreted. Its function is as follows. pH-dependent, voltage-gated and anion-selective pore-forming peptide. This chain is Kiwellin, found in Actinidia deliciosa (Kiwi).